Consider the following 84-residue polypeptide: MARENKKELIGRVVSDKMSKTIVVEIVQRKMHPIYHKYLKVSKKVKAHDEKEVSKVGDKVKIIEVRPISKDKRWSLVEVLEKLK.

This sequence belongs to the universal ribosomal protein uS17 family. In terms of assembly, part of the 30S ribosomal subunit.

Functionally, one of the primary rRNA binding proteins, it binds specifically to the 5'-end of 16S ribosomal RNA. The protein is Small ribosomal subunit protein uS17 of Borreliella afzelii (strain PKo) (Borrelia afzelii).